A 54-amino-acid polypeptide reads, in one-letter code: Soricidin (54 aa).

Disulfide bonds link C2/C23, C6/C27, and C9/C41.

Belongs to the opioid neuropeptide precursor family. As to quaternary structure, member of a multiprotein complex. In terms of tissue distribution, salivary gland.

Its subcellular location is the secreted. Functionally, paralytic toxin that immobilizes a mealworm for 7 days. Inhibits the transient receptor potential cation channel subfamily V member 6 (TRPV6). The sequence is that of Soricidin from Blarina brevicauda (Northern short-tailed shrew).